Here is a 79-residue protein sequence, read N- to C-terminus: DNA-directed RNA polymerase subunit omega (79 aa).

The protein belongs to the RNA polymerase subunit omega family. The RNAP catalytic core consists of 2 alpha, 1 beta, 1 beta' and 1 omega subunit. When a sigma factor is associated with the core the holoenzyme is formed, which can initiate transcription.

It carries out the reaction RNA(n) + a ribonucleoside 5'-triphosphate = RNA(n+1) + diphosphate. In terms of biological role, promotes RNA polymerase assembly. Latches the N- and C-terminal regions of the beta' subunit thereby facilitating its interaction with the beta and alpha subunits. This is DNA-directed RNA polymerase subunit omega from Bdellovibrio bacteriovorus (strain ATCC 15356 / DSM 50701 / NCIMB 9529 / HD100).